The following is a 205-amino-acid chain: Large ribosomal subunit protein uL3c (205 aa).

The interval 130 to 150 (RGPMSHGSKNHRQPGSIGAGT) is disordered.

Belongs to the universal ribosomal protein uL3 family. In terms of assembly, part of the 50S ribosomal subunit.

Its subcellular location is the plastid. The protein resides in the chloroplast. Its function is as follows. One of the primary rRNA binding proteins, it binds directly near the 3'-end of the 23S rRNA, where it nucleates assembly of the 50S subunit. The polypeptide is Large ribosomal subunit protein uL3c (rpl3) (Gracilaria tenuistipitata var. liui (Red alga)).